The following is a 202-amino-acid chain: dITP/XTP pyrophosphatase (202 aa).

Position 11–16 (11–16 (TNNANK)) interacts with substrate. Aspartate 73 serves as the catalytic Proton acceptor. A Mg(2+)-binding site is contributed by aspartate 73. Residues serine 74, 155-158 (FGYD), lysine 178, and 183-184 (HR) each bind substrate.

Belongs to the HAM1 NTPase family. Homodimer. It depends on Mg(2+) as a cofactor.

It catalyses the reaction XTP + H2O = XMP + diphosphate + H(+). It carries out the reaction dITP + H2O = dIMP + diphosphate + H(+). The enzyme catalyses ITP + H2O = IMP + diphosphate + H(+). Pyrophosphatase that catalyzes the hydrolysis of nucleoside triphosphates to their monophosphate derivatives, with a high preference for the non-canonical purine nucleotides XTP (xanthosine triphosphate), dITP (deoxyinosine triphosphate) and ITP. Seems to function as a house-cleaning enzyme that removes non-canonical purine nucleotides from the nucleotide pool, thus preventing their incorporation into DNA/RNA and avoiding chromosomal lesions. The sequence is that of dITP/XTP pyrophosphatase from Lactiplantibacillus plantarum (strain ATCC BAA-793 / NCIMB 8826 / WCFS1) (Lactobacillus plantarum).